Reading from the N-terminus, the 211-residue chain is ATP phosphoribosyltransferase (211 aa).

It belongs to the ATP phosphoribosyltransferase family. Short subfamily. Heteromultimer composed of HisG and HisZ subunits.

The protein resides in the cytoplasm. It carries out the reaction 1-(5-phospho-beta-D-ribosyl)-ATP + diphosphate = 5-phospho-alpha-D-ribose 1-diphosphate + ATP. The protein operates within amino-acid biosynthesis; L-histidine biosynthesis; L-histidine from 5-phospho-alpha-D-ribose 1-diphosphate: step 1/9. Its function is as follows. Catalyzes the condensation of ATP and 5-phosphoribose 1-diphosphate to form N'-(5'-phosphoribosyl)-ATP (PR-ATP). Has a crucial role in the pathway because the rate of histidine biosynthesis seems to be controlled primarily by regulation of HisG enzymatic activity. The polypeptide is ATP phosphoribosyltransferase (Clostridium botulinum (strain 657 / Type Ba4)).